A 242-amino-acid chain; its full sequence is Ribose-5-phosphate isomerase A (242 aa).

Substrate contacts are provided by residues 39–42, 95–98, and 108–111; these read SGST, DGAD, and KGGG. The Proton acceptor role is filled by glutamate 117. Lysine 135 serves as a coordination point for substrate.

It belongs to the ribose 5-phosphate isomerase family. In terms of assembly, homodimer.

The catalysed reaction is aldehydo-D-ribose 5-phosphate = D-ribulose 5-phosphate. The protein operates within carbohydrate degradation; pentose phosphate pathway; D-ribose 5-phosphate from D-ribulose 5-phosphate (non-oxidative stage): step 1/1. In terms of biological role, catalyzes the reversible conversion of ribose-5-phosphate to ribulose 5-phosphate. This chain is Ribose-5-phosphate isomerase A, found in Chlamydia trachomatis serovar L2 (strain ATCC VR-902B / DSM 19102 / 434/Bu).